The sequence spans 614 residues: GPI transamidase component GAA1 (614 aa).

Residues 1-19 (MALLEKLHRRIVDMGLVPR) lie on the Cytoplasmic side of the membrane. The helical transmembrane segment at 20-40 (IIALLPVISMLCALFGFISIA) threads the bilayer. The Lumenal segment spans residues 41–356 (ILPMDGQYRR…APRQFVSISS (316 aa)). Asn-87 carries N-linked (GlcNAc...) asparagine glycosylation. The helical transmembrane segment at 357–377 (YLPSAVALSIAFAISSLNAFI) threads the bilayer. Residues 378 to 394 (NNAYANISLFSEYNLVA) lie on the Cytoplasmic side of the membrane. A helical transmembrane segment spans residues 395 to 415 (LLVWFVSLVISFVVSQAFLLI). The Lumenal segment spans residues 416 to 464 (PSSGLLMTISMASCFLPLILSRKIHISEPLSYRLKNVAFLYFSLVSTSL). The chain crosses the membrane as a helical span at residues 465–485 (LMINFAMALLIGTLAFPMTFV). Topologically, residues 486–535 (KTIVESSSEHEVTTQSSNPIKTEPKDEIELVENHMDTTPATPQQQKQKLK) are cytoplasmic. Residues 536–556 (NLVLLILTNPFISITLFGLFF) form a helical membrane-spanning segment. The Lumenal portion of the chain corresponds to 557–577 (DDEFHGFDIINKLVSAWLDLK). The chain crosses the membrane as a helical span at residues 578-598 (CWSWFVLCIGWLPCWLLILAS). Over 599 to 614 (SFESKSVVVRSKEKQS) the chain is Cytoplasmic. Positions 610–614 (KEKQS) match the Prevents secretion from ER motif.

In terms of assembly, forms a complex with CDC91, GPI17, GPI16 and GPI8.

The protein resides in the endoplasmic reticulum membrane. The protein operates within glycolipid biosynthesis; glycosylphosphatidylinositol-anchor biosynthesis. Functionally, component of the GPI transamidase complex. Required for a terminal step of GPI anchor attachment onto proteins. Affects endocytosis. This chain is GPI transamidase component GAA1 (GAA1), found in Saccharomyces cerevisiae (strain ATCC 204508 / S288c) (Baker's yeast).